We begin with the raw amino-acid sequence, 332 residues long: Glycerol-3-phosphate dehydrogenase [NAD(P)+] (332 aa).

W11, R30, and K108 together coordinate NADPH. K108, G137, and S139 together coordinate sn-glycerol 3-phosphate. An NADPH-binding site is contributed by A141. K192, D245, S255, R256, and N257 together coordinate sn-glycerol 3-phosphate. Residue K192 is the Proton acceptor of the active site. R256 lines the NADPH pocket. NADPH-binding residues include V280 and E282.

This sequence belongs to the NAD-dependent glycerol-3-phosphate dehydrogenase family.

It localises to the cytoplasm. The catalysed reaction is sn-glycerol 3-phosphate + NAD(+) = dihydroxyacetone phosphate + NADH + H(+). It catalyses the reaction sn-glycerol 3-phosphate + NADP(+) = dihydroxyacetone phosphate + NADPH + H(+). The protein operates within membrane lipid metabolism; glycerophospholipid metabolism. Functionally, catalyzes the reduction of the glycolytic intermediate dihydroxyacetone phosphate (DHAP) to sn-glycerol 3-phosphate (G3P), the key precursor for phospholipid synthesis. The protein is Glycerol-3-phosphate dehydrogenase [NAD(P)+] of Burkholderia thailandensis (strain ATCC 700388 / DSM 13276 / CCUG 48851 / CIP 106301 / E264).